Consider the following 299-residue polypeptide: Somaliensene A/B synthase (299 aa).

7 consecutive transmembrane segments (helical) span residues 32 to 49, 56 to 72, 110 to 132, 153 to 171, 177 to 194, 222 to 241, and 247 to 269; these read WTTLFPATCFVLAAAVHT, TAVAVASGVLYFWLFVY, IAVRVAFPLYGWFLGVLEWALLW, LYAGIGVVAQLAAAWEIVA, AWRWIVTLTITVTLLMSV, VFLCAGFALGPLAIHHFLMA, and WWIVATDVVLGGLSLLLAFRVVL.

It belongs to the UbiA prenyltransferase family. Mg(2+) serves as cofactor.

The protein resides in the cell membrane. It catalyses the reaction (2E,6E,10E,14E)-geranylfarnesyl diphosphate = somaliensene A + diphosphate. The catalysed reaction is (2E,6E,10E,14E)-geranylfarnesyl diphosphate = (-)-somaliensene B + diphosphate. Its pathway is secondary metabolite biosynthesis; terpenoid biosynthesis. Functionally, sesterterpene cyclase, which converts geranylfarnesyl diphosphate (GFPP) into the terpenes somaliensene A and somaliensene B. The sequence is that of Somaliensene A/B synthase from Streptomyces somaliensis (strain ATCC 33201 / DSM 40738 / JCM 12659 / KCTC 9044 / NCTC 11332 / NRRL B-12077 / IP 733).